Here is a 449-residue protein sequence, read N- to C-terminus: QVQLVQSGGGVVQPGRSLRLSCAASGFTFSRYTIHWVRQAPGKGLEWVAVMSYNGNNKHYADSVNGRFTISRNDSKNTLYLNMNSLRPEDTAVYYCARIRDTAMFFAHWGQGTLVTVSSASTKGPSVFPLAPSSKSTSGGTAALGCLVKDYFPEPVTVSWNSGALTSGVHTFPAVLQSSGLYSLSSVVTVPSSSLGTQTYICNVNHKPSNTKVDKKVEPKSCDKTHTCPPCPAPELLGGPSVFLFPPKPKDTLMISRTPEVTCVVVDVSHEDPEVKFNWYVDGVEVHNAKTKPREEQYNSTYRVVSVLTVLHQDWLNGKEYKCKVSNKALPAPIEKTISKAKGQPREPQVYTLPPSRDELTKNQVSLTCLVKGFYPSDIAVEWESNGQPENNYKTTPPVLDSDGSFFLYSKLTVDKSRWQQGNVFSCSVMHEALHNHYTQKSLSLSPGK.

At Gln1 the chain carries Pyrrolidone carboxylic acid. 4 Ig-like domains span residues 1–96, 125–218, 240–339, and 348–444; these read QVQL…VYYC, PSVF…KKVE, PSVF…KTIS, and PQVY…KSLS. The interval 1–119 is variable (V) domain, involved in antigen recognition; that stretch reads QVQLVQSGGG…GQGTLVTVSS (119 aa). Disulfide bonds link Cys22-Cys96, Cys146-Cys202, Cys263-Cys323, and Cys369-Cys427. N-linked (GlcNAc...) asparagine glycosylation occurs at Asn73. The tract at residues 120–449 is constant (C) domain; it reads ASTKGPSVFP…QKSLSLSPGK (330 aa). Asn299 carries an N-linked (GlcNAc...) (complex) asparagine glycan.

In terms of assembly, immunoglobulins are composed of two identical heavy chains and two identical light chains; disulfide-linked.

It localises to the secreted. Its subcellular location is the cell membrane. Its function is as follows. Immunoglobulins, also known as antibodies, are membrane-bound or secreted glycoproteins produced by B lymphocytes. In the recognition phase of humoral immunity, the membrane-bound immunoglobulins serve as receptors which, upon binding of a specific antigen, trigger the clonal expansion and differentiation of B lymphocytes into immunoglobulins-secreting plasma cells. Secreted immunoglobulins mediate the effector phase of humoral immunity, which results in the elimination of bound antigens. The antigen binding site is formed by the variable domain of one heavy chain, together with that of its associated light chain. Thus, each immunoglobulin has two antigen binding sites with remarkable affinity for a particular antigen. The variable domains are assembled by a process called V-(D)-J rearrangement and can then be subjected to somatic hypermutations which, after exposure to antigen and selection, allow affinity maturation for a particular antigen. The polypeptide is Immunoglobulin gamma-1 heavy chain (Homo sapiens (Human)).